The chain runs to 382 residues: Gap junction alpha-1 protein (382 aa).

Residues 2–23 (GDWSALGKLLDKVQAYSTAGGK) are Cytoplasmic-facing. Ser5 is subject to Phosphoserine. A helical membrane pass occupies residues 24–44 (VWLSVLFIFRILLLGTAVESA). The Extracellular portion of the chain corresponds to 45 to 76 (WGDEQSAFRCNTQQPGCENVCYDKSFPISHVR). Disulfide bonds link Cys54–Cys192 and Cys187–Cys198. The helical transmembrane segment at 77–97 (FWVLQIIFVSVPTLLYLAHVF) threads the bilayer. At 98 to 155 (YVMRKEEKLNKKEEELKVAQTDGVNVEMHLKQIEIKKFKYGIEEHGKVKMRGGLLRTY) the chain is on the cytoplasmic side. Lys144 participates in a covalent cross-link: Glycyl lysine isopeptide (Lys-Gly) (interchain with G-Cter in SUMO). The chain crosses the membrane as a helical span at residues 156 to 176 (IISILFKSVFEVAFLLIQWYI). Over 177 to 207 (YGFSLSAVYTCKRDPCPHQVDCFLSRPTEKT) the chain is Extracellular. The helical transmembrane segment at 208-228 (IFIIFMLVVSLVSLALNIIEL) threads the bilayer. At 229-382 (FYAFFKGVKD…SRPRPDDLEI (154 aa)) the chain is on the cytoplasmic side. Lys237 is covalently cross-linked (Glycyl lysine isopeptide (Lys-Gly) (interchain with G-Cter in SUMO)). The interval 244–382 (SDPYHATTGP…SRPRPDDLEI (139 aa)) is interaction with NOV. The residue at position 247 (Tyr247) is a Phosphotyrosine. A phosphoserine mark is found at Ser255, Ser257, and Ser262. The interaction with UBQLN4 stretch occupies residues 264 to 382 (KYAYFNGCSS…SRPRPDDLEI (119 aa)). Cys271 bears the S-nitrosocysteine mark. Position 275 is a phosphothreonine (Thr275). A phosphoserine mark is found at Ser306 and Ser314. Over residues 317–332 (QNRMGQAGSTISNSHA) the composition is skewed to polar residues. The segment at 317 to 382 (QNRMGQAGST…SRPRPDDLEI (66 aa)) is disordered. Ser325 carries the phosphoserine; by CK1 modification. The residue at position 326 (Thr326) is a Phosphothreonine. Phosphoserine; by CK1 is present on residues Ser328 and Ser330. Positions 342–351 (QNSKKLDAGH) are enriched in basic and acidic residues. Phosphoserine occurs at positions 344 and 365. The span at 362–374 (RPSSRASSRASSR) shows a compositional bias: low complexity. Ser368 is modified (phosphoserine; by PKC/PRKCG and PKC/PRKCD). Residues Ser369 and Ser373 each carry the phosphoserine modification.

This sequence belongs to the connexin family. Alpha-type (group II) subfamily. In terms of assembly, a connexon is composed of a hexamer of connexins. Interacts with SGSM3. Interacts with RIC1/CIP150. Interacts with CNST and CSNK1D. Interacts (via C-terminus) with TJP1. Interacts (via C-terminus) with SRC (via SH3 domain). Interacts (not ubiquitinated) with UBQLN4 (via UBA domain). Interacts with NOV. Interacts with TMEM65. Interacts with ANK3/ANKG and PKP2. In terms of processing, phosphorylation at Ser-325, Ser-328 and Ser-330 by CK1 modulates gap junction assembly. Phosphorylated at Ser-368 by PRKCG; phosphorylation induces disassembly of gap junction plaques and inhibition of gap junction activity. Phosphorylation at Ser-368 by PRKCD triggers its internalization into small vesicles leading to proteasome-mediated degradation. Post-translationally, sumoylated with SUMO1, SUMO2 and SUMO3, which may regulate the level of functional Cx43 gap junctions at the plasma membrane. May be desumoylated by SENP1 or SENP2. S-nitrosylation at Cys-271 is enriched at the muscle endothelial gap junction in arteries, it augments channel permeability and may regulate of smooth muscle cell to endothelial cell communication. In terms of processing, acetylated in the developing cortex; leading to delocalization from the cell membrane.

The protein localises to the cell membrane. The protein resides in the cell junction. Its subcellular location is the gap junction. It is found in the endoplasmic reticulum. In terms of biological role, gap junction protein that acts as a regulator of bladder capacity. A gap junction consists of a cluster of closely packed pairs of transmembrane channels, the connexons, through which materials of low MW diffuse from one cell to a neighboring cell. May play a critical role in the physiology of hearing by participating in the recycling of potassium to the cochlear endolymph. Negative regulator of bladder functional capacity: acts by enhancing intercellular electrical and chemical transmission, thus sensitizing bladder muscles to cholinergic neural stimuli and causing them to contract. May play a role in cell growth inhibition through the regulation of NOV expression and localization. Plays an essential role in gap junction communication in the ventricles. This is Gap junction alpha-1 protein (GJA1) from Sus scrofa (Pig).